Consider the following 518-residue polypeptide: Serine/threonine-protein kinase PRR1 (518 aa).

Position 1 is an N-acetylmethionine (Met1). The segment covering 1–12 (MDEYSSIYSQPK) has biased composition (polar residues). A disordered region spans residues 1–59 (MDEYSSIYSQPKTPRLKQEGFPDSIGDQHEKALIDENGEEDKKMASTEGTTGDSRSTPL). The span at 16–45 (LKQEGFPDSIGDQHEKALIDENGEEDKKMA) shows a compositional bias: basic and acidic residues. A compositionally biased stretch (polar residues) spans 47 to 59 (TEGTTGDSRSTPL). A Phosphoserine modification is found at Ser132. The Protein kinase domain maps to 192–508 (WKKVRPIGSG…INEIYESPFV (317 aa)). Residues 198-206 (IGSGNFSTV) and Lys225 contribute to the ATP site. Asp354 (proton acceptor) is an active-site residue.

It belongs to the protein kinase superfamily. CAMK Ser/Thr protein kinase family. NIM1 subfamily.

It is found in the cytoplasm. The catalysed reaction is L-seryl-[protein] + ATP = O-phospho-L-seryl-[protein] + ADP + H(+). The enzyme catalyses L-threonyl-[protein] + ATP = O-phospho-L-threonyl-[protein] + ADP + H(+). Its function is as follows. Protein kinase that functions as a regulator in the pheromone-induced mating pathway downstream of mitogen-activated protein kinase (MAPK) FUS3. Diminishes transcriptional induction of genes in response to pheromone signaling. This chain is Serine/threonine-protein kinase PRR1 (PRR1), found in Saccharomyces cerevisiae (strain ATCC 204508 / S288c) (Baker's yeast).